The chain runs to 71 residues: Small ribosomal subunit protein bS21 (71 aa).

This sequence belongs to the bacterial ribosomal protein bS21 family.

In Nitrosococcus oceani (strain ATCC 19707 / BCRC 17464 / JCM 30415 / NCIMB 11848 / C-107), this protein is Small ribosomal subunit protein bS21.